The following is a 494-amino-acid chain: Serine carboxypeptidase-like 21 (494 aa).

The signal sequence occupies residues 1–23 (MGRLVEAIIASILLSLCFTITKS). Residues N37 and N69 are each glycosylated (N-linked (GlcNAc...) asparagine). Cystine bridges form between C85–C383, C247–C263, and C286–C350. The active site involves S179. Residues N198 and N248 are each glycosylated (N-linked (GlcNAc...) asparagine). N402 carries N-linked (GlcNAc...) asparagine glycosylation. D418 is a catalytic residue. Residue N460 is glycosylated (N-linked (GlcNAc...) asparagine). The active site involves H471.

Belongs to the peptidase S10 family. As to expression, expressed in flowers and siliques.

The protein localises to the secreted. Its function is as follows. Probable carboxypeptidase. This Arabidopsis thaliana (Mouse-ear cress) protein is Serine carboxypeptidase-like 21 (SCPL21).